Consider the following 269-residue polypeptide: Formamidopyrimidine-DNA glycosylase (269 aa).

Residue proline 2 is the Schiff-base intermediate with DNA of the active site. Glutamate 3 serves as the catalytic Proton donor. Catalysis depends on lysine 57, which acts as the Proton donor; for beta-elimination activity. Residues histidine 90, arginine 109, and arginine 150 each coordinate DNA. The FPG-type zinc finger occupies 235–269 (NVYGRAGQPCVQCDAILKADRHGQRSTAYCPQCQR). The active-site Proton donor; for delta-elimination activity is the arginine 259.

Belongs to the FPG family. Monomer. It depends on Zn(2+) as a cofactor.

It catalyses the reaction Hydrolysis of DNA containing ring-opened 7-methylguanine residues, releasing 2,6-diamino-4-hydroxy-5-(N-methyl)formamidopyrimidine.. The enzyme catalyses 2'-deoxyribonucleotide-(2'-deoxyribose 5'-phosphate)-2'-deoxyribonucleotide-DNA = a 3'-end 2'-deoxyribonucleotide-(2,3-dehydro-2,3-deoxyribose 5'-phosphate)-DNA + a 5'-end 5'-phospho-2'-deoxyribonucleoside-DNA + H(+). Functionally, involved in base excision repair of DNA damaged by oxidation or by mutagenic agents. Acts as a DNA glycosylase that recognizes and removes damaged bases. Has a preference for oxidized purines, such as 7,8-dihydro-8-oxoguanine (8-oxoG). Has AP (apurinic/apyrimidinic) lyase activity and introduces nicks in the DNA strand. Cleaves the DNA backbone by beta-delta elimination to generate a single-strand break at the site of the removed base with both 3'- and 5'-phosphates. This is Formamidopyrimidine-DNA glycosylase from Alcanivorax borkumensis (strain ATCC 700651 / DSM 11573 / NCIMB 13689 / SK2).